A 58-amino-acid chain; its full sequence is Metallothionein (58 aa).

The beta stretch occupies residues 1 to 29 (MPDPCCIDKCECKEGGCKAGCKCTSCRCT). Residues cysteine 5, cysteine 6, cysteine 10, cysteine 12, cysteine 17, cysteine 21, cysteine 23, cysteine 26, cysteine 28, cysteine 31, cysteine 34, cysteine 38, cysteine 40, cysteine 46, cysteine 50, cysteine 54, cysteine 56, and cysteine 57 each coordinate a divalent metal cation. The alpha stretch occupies residues 30-58 (PCEKCSSGCKCTTKEDCCKTCTKPCSCCP).

This sequence belongs to the metallothionein superfamily. Type 3 family.

In terms of biological role, metallothioneins have a high content of cysteine residues that bind various heavy metals. Class I MTS in marine crustacea are involved in the sequestration of elevated levels of heavy-metal ions. The sequence is that of Metallothionein from Carcinus maenas (Common shore crab).